A 339-amino-acid chain; its full sequence is MKGVTIHNFCYSYFKVCLLVMSLAYGSAEWDGSSSQIAKTIIVNPNDARYFKTVQSAIDSIPLQNQDWIRILISNGIYSEKVTIPRGKGYIYMQGGGIEKTIIAYGDHQLTNTSATFTSYPSNIIITGITFKNKYNIASSSSPTKPAVAAMMLGDKYAIIDSSFDGFQDTLYDDYGRHYYKRCVISGGIDFIFGGAQSIFEGCTLKLRVGIYPPNEVYGTITAQGRDSPTDKGGFVFKDCTVMGSGKALLGRAWKSYSRVIFYRSMFSDNILPIGWDAWKAKGQEGHITFVEFGCTGVGADTSKRVPWLTKASEKDVLQFTNLTFIDEEGWLSRLPIKF.

A signal peptide spans 1-28; that stretch reads MKGVTIHNFCYSYFKVCLLVMSLAYGSA. Asn112 carries an N-linked (GlcNAc...) asparagine glycan. Substrate is bound at residue Thr116. Asp169 acts as the Proton donor in catalysis. Asp190 functions as the Nucleophile in the catalytic mechanism. Positions 252 and 254 each coordinate substrate. An N-linked (GlcNAc...) asparagine glycan is attached at Asn322.

This sequence belongs to the pectinesterase family. As to expression, expressed in siliques.

It is found in the secreted. The protein localises to the cell wall. It catalyses the reaction [(1-&gt;4)-alpha-D-galacturonosyl methyl ester](n) + n H2O = [(1-&gt;4)-alpha-D-galacturonosyl](n) + n methanol + n H(+). It functions in the pathway glycan metabolism; pectin degradation; 2-dehydro-3-deoxy-D-gluconate from pectin: step 1/5. Functionally, acts in the modification of cell walls via demethylesterification of cell wall pectin. In Arabidopsis thaliana (Mouse-ear cress), this protein is Putative pectinesterase 10 (PME10).